The chain runs to 142 residues: Hemoglobin subunit alpha (142 aa).

Positions 1 to 142 constitute a Globin domain; it reads VLSAADKNNV…VSTVLTSKYR (142 aa). Ser3 is subject to Phosphoserine. An N6-succinyllysine mark is found at Lys7 and Lys11. An N6-acetyllysine; alternate modification is found at Lys16. Lys16 is modified (N6-succinyllysine; alternate). Tyr24 carries the post-translational modification Phosphotyrosine. Position 35 is a phosphoserine (Ser35). Residue Lys40 is modified to N6-succinyllysine. Residue His58 participates in O2 binding. Residue His87 participates in heme b binding. Ser102 carries the phosphoserine modification. At Thr108 the chain carries Phosphothreonine. Ser125 carries the phosphoserine modification. Thr135 and Thr138 each carry phosphothreonine. The residue at position 139 (Ser139) is a Phosphoserine.

It belongs to the globin family. As to quaternary structure, heterotetramer of two alpha chains and two beta chains. As to expression, red blood cells.

Its function is as follows. Involved in oxygen transport from the lung to the various peripheral tissues. In terms of biological role, hemopressin acts as an antagonist peptide of the cannabinoid receptor CNR1. Hemopressin-binding efficiently blocks cannabinoid receptor CNR1 and subsequent signaling. This Procavia capensis habessinica (Abyssinian hyrax) protein is Hemoglobin subunit alpha (HBA).